The primary structure comprises 327 residues: Undecaprenyl-phosphate 4-deoxy-4-formamido-L-arabinose transferase (327 aa).

The Cytoplasmic segment spans residues 1–235 (MFDAAPIKKV…TCLTTTPLRL (235 aa)). A helical membrane pass occupies residues 236–256 (LSLLGSVIAIGGFSLSVLLIV). Over 257-269 (LRLALGPQWAAEG) the chain is Periplasmic. Residues 270-290 (VFMLFAVLFTFIGAQFIGMGL) form a helical membrane-spanning segment. Residues 291–327 (LGEYIGRIYNDVRARPRYFVQQVIYPESTPFTEESHQ) lie on the Cytoplasmic side of the membrane.

This sequence belongs to the glycosyltransferase 2 family.

It is found in the cell inner membrane. It carries out the reaction UDP-4-deoxy-4-formamido-beta-L-arabinose + di-trans,octa-cis-undecaprenyl phosphate = 4-deoxy-4-formamido-alpha-L-arabinopyranosyl di-trans,octa-cis-undecaprenyl phosphate + UDP. Its pathway is glycolipid biosynthesis; 4-amino-4-deoxy-alpha-L-arabinose undecaprenyl phosphate biosynthesis; 4-amino-4-deoxy-alpha-L-arabinose undecaprenyl phosphate from UDP-4-deoxy-4-formamido-beta-L-arabinose and undecaprenyl phosphate: step 1/2. The protein operates within bacterial outer membrane biogenesis; lipopolysaccharide biosynthesis. In terms of biological role, catalyzes the transfer of 4-deoxy-4-formamido-L-arabinose from UDP to undecaprenyl phosphate. The modified arabinose is attached to lipid A and is required for resistance to polymyxin and cationic antimicrobial peptides. In Salmonella choleraesuis (strain SC-B67), this protein is Undecaprenyl-phosphate 4-deoxy-4-formamido-L-arabinose transferase.